The sequence spans 153 residues: Ribosomal RNA large subunit methyltransferase H (153 aa).

S-adenosyl-L-methionine contacts are provided by Leu71 and Gly102.

Belongs to the RNA methyltransferase RlmH family. In terms of assembly, homodimer.

It is found in the cytoplasm. The catalysed reaction is pseudouridine(1915) in 23S rRNA + S-adenosyl-L-methionine = N(3)-methylpseudouridine(1915) in 23S rRNA + S-adenosyl-L-homocysteine + H(+). In terms of biological role, specifically methylates the pseudouridine at position 1915 (m3Psi1915) in 23S rRNA. This chain is Ribosomal RNA large subunit methyltransferase H, found in Anaeromyxobacter dehalogenans (strain 2CP-1 / ATCC BAA-258).